The sequence spans 276 residues: Probable endonuclease 4 (276 aa).

Residues histidine 67, histidine 107, glutamate 142, aspartate 176, histidine 179, histidine 211, aspartate 224, histidine 226, and glutamate 256 each contribute to the Zn(2+) site.

This sequence belongs to the AP endonuclease 2 family. It depends on Zn(2+) as a cofactor.

The enzyme catalyses Endonucleolytic cleavage to 5'-phosphooligonucleotide end-products.. Endonuclease IV plays a role in DNA repair. It cleaves phosphodiester bonds at apurinic or apyrimidinic (AP) sites, generating a 3'-hydroxyl group and a 5'-terminal sugar phosphate. This is Probable endonuclease 4 from Methanosphaera stadtmanae (strain ATCC 43021 / DSM 3091 / JCM 11832 / MCB-3).